We begin with the raw amino-acid sequence, 287 residues long: ATP synthase gamma chain (287 aa).

The protein belongs to the ATPase gamma chain family. In terms of assembly, F-type ATPases have 2 components, CF(1) - the catalytic core - and CF(0) - the membrane proton channel. CF(1) has five subunits: alpha(3), beta(3), gamma(1), delta(1), epsilon(1). CF(0) has three main subunits: a, b and c.

Its subcellular location is the cell inner membrane. In terms of biological role, produces ATP from ADP in the presence of a proton gradient across the membrane. The gamma chain is believed to be important in regulating ATPase activity and the flow of protons through the CF(0) complex. In Shigella boydii serotype 4 (strain Sb227), this protein is ATP synthase gamma chain.